Consider the following 530-residue polypeptide: MFS transporter PfmaC (530 aa).

The segment at 41 to 76 is disordered; sequence TTAVSDGDNQSSTMSGKTAAGDATSPASGSGSGGWF. Over residues 42–56 the composition is skewed to polar residues; it reads TAVSDGDNQSSTMSG. Over residues 59 to 69 the composition is skewed to low complexity; that stretch reads AAGDATSPASG. The next 10 membrane-spanning stretches (helical) occupy residues 165-182, 195-215, 226-246, 261-281, 324-344, 369-389, 396-416, 422-442, 456-476, and 493-513; these read YWLPACLMTWSAFVLGMY, FFIGLFEGAAWPGITYTLGCW, ALFVMSGVLGQMFSGYLQAAL, WLFIFDFILAVPIAIYGLFCF, IFTSWQVYAFTLGYALWSLTV, NIPTALGAVNFVTMLTTGFVS, GPVCLAVGCVLIFTYSIFTAW, LLMAVFILNGVYGCYTPLLAG, AFILGLMTSVGGAVVIPFQQL, and PSALAFVIALTCWTGLGIPLL.

It belongs to the major facilitator superfamily. Allantoate permease family.

Its subcellular location is the cell membrane. Its function is as follows. MFS transporter; part of the gene cluster that mediates the biosynthesis of dihydroxynaphthalene (DHN)-melanin, a bluish-green pigment forming a dark layer in the conidial wall that protects the conidia from UV radiations. The sequence is that of MFS transporter PfmaC from Pestalotiopsis fici (strain W106-1 / CGMCC3.15140).